The chain runs to 383 residues: Putative glutamate--cysteine ligase 2 (383 aa).

Belongs to the glutamate--cysteine ligase type 2 family. YbdK subfamily.

It carries out the reaction L-cysteine + L-glutamate + ATP = gamma-L-glutamyl-L-cysteine + ADP + phosphate + H(+). In terms of biological role, ATP-dependent carboxylate-amine ligase which exhibits weak glutamate--cysteine ligase activity. The chain is Putative glutamate--cysteine ligase 2 from Legionella pneumophila subsp. pneumophila (strain Philadelphia 1 / ATCC 33152 / DSM 7513).